Here is a 303-residue protein sequence, read N- to C-terminus: Probable 5-dehydro-4-deoxyglucarate dehydratase (303 aa).

This sequence belongs to the DapA family.

The catalysed reaction is 5-dehydro-4-deoxy-D-glucarate + H(+) = 2,5-dioxopentanoate + CO2 + H2O. The protein operates within carbohydrate acid metabolism; D-glucarate degradation; 2,5-dioxopentanoate from D-glucarate: step 2/2. The protein is Probable 5-dehydro-4-deoxyglucarate dehydratase of Pseudomonas fluorescens (strain Pf0-1).